A 264-amino-acid polypeptide reads, in one-letter code: Late embryogenesis abundant protein D-34 (264 aa).

Over residues 1–16 the composition is skewed to low complexity; the sequence is MSQGQPRRPQQPAGQG. Residues 1–23 form a disordered region; it reads MSQGQPRRPQQPAGQGENQEPIK. SMP domains follow at residues 22 to 76, 138 to 194, and 203 to 261; these read IKYG…RNEQ, ITIG…AHNA, and IKLN…LNEN.

The protein belongs to the LEA type SMP family.

Its function is as follows. LEA proteins are late embryonic proteins abundant in higher plant seed embryos. There are two subsets of LEA proteins (5a and 5b), the first ones are expressed when the cotyledon weight reach 80 mg and the second set are expressed above 100 mg. The function of those proteins is not known. The sequence is that of Late embryogenesis abundant protein D-34 from Gossypium hirsutum (Upland cotton).